A 410-amino-acid chain; its full sequence is Aspartate aminotransferase (410 aa).

L-aspartate contacts are provided by Gly47, Trp135, and Asn185. N6-(pyridoxal phosphate)lysine is present on Lys249. Arg385 lines the L-aspartate pocket.

It belongs to the class-I pyridoxal-phosphate-dependent aminotransferase family. Homodimer. Requires pyridoxal 5'-phosphate as cofactor.

Its subcellular location is the cytoplasm. The catalysed reaction is L-aspartate + 2-oxoglutarate = oxaloacetate + L-glutamate. The enzyme catalyses L-2-aminoadipate + 2-oxoglutarate = 2-oxoadipate + L-glutamate. Catalyzes the reversible conversion of aspartate and 2-oxoglutarate to glutamate and oxaloacetate. Genetic evidence shows that this protein is involved in L-lysine catabolism. It may have 2-aminoadipate:2-oxoglutarate aminotransferase activity. The protein is Aspartate aminotransferase (aatB) of Rhizobium meliloti (strain 1021) (Ensifer meliloti).